Consider the following 497-residue polypeptide: Guanosine-5'-triphosphate,3'-diphosphate pyrophosphatase (497 aa).

This sequence belongs to the GppA/Ppx family. GppA subfamily.

It carries out the reaction guanosine 3'-diphosphate 5'-triphosphate + H2O = guanosine 3',5'-bis(diphosphate) + phosphate + H(+). The protein operates within purine metabolism; ppGpp biosynthesis; ppGpp from GTP: step 2/2. Catalyzes the conversion of pppGpp to ppGpp. Guanosine pentaphosphate (pppGpp) is a cytoplasmic signaling molecule which together with ppGpp controls the 'stringent response', an adaptive process that allows bacteria to respond to amino acid starvation, resulting in the coordinated regulation of numerous cellular activities. This Aliivibrio fischeri (strain MJ11) (Vibrio fischeri) protein is Guanosine-5'-triphosphate,3'-diphosphate pyrophosphatase.